The sequence spans 174 residues: Ribosome maturation factor RimM (174 aa).

In terms of domain architecture, PRC barrel spans 97 to 171 (EGYYYDFDII…RMVIDPIPGL (75 aa)).

This sequence belongs to the RimM family. Binds ribosomal protein uS19.

It is found in the cytoplasm. In terms of biological role, an accessory protein needed during the final step in the assembly of 30S ribosomal subunit, possibly for assembly of the head region. Essential for efficient processing of 16S rRNA. May be needed both before and after RbfA during the maturation of 16S rRNA. It has affinity for free ribosomal 30S subunits but not for 70S ribosomes. This is Ribosome maturation factor RimM from Symbiobacterium thermophilum (strain DSM 24528 / JCM 14929 / IAM 14863 / T).